The sequence spans 450 residues: MSETPQKRLYIKTYGCQMNVYDSERMADVLRPLGYGIVDEPEGADLVVLNTCHIREKATEKVYSELGYIKQMKGRKAEAGGQMTVAVAGCVAQAEGQEIMRRQPAVDLVVGPQAYHQLPELIARAHRATGERLSADFAADEKFDALPAERQVSGVSAFLTVQEGCDKFCTFCVVPYTRGGEWSRPPEQIEDEARRLADQGVREVTLLGQNVNAYDGGGYTLARLVRRLAKIPGLDRIRYTTSHPRDMGDDLIEAHGELPELMPYLHLPVQAGSDKILKAMNRDHTAESYIRLIEKIRQARPDIAMSGDFIVGFPGERDGDFEKTLDLVREVGFASAFSFKYSRRPGTPASAMPGQVDEAVKAERLERLNQLLDEQQKAFNILQVGKTMPVLFEKKGRNPGQIVGRSPYLQAVHAVGSEDLLGQIVPVRIESSAKMSLGGVLETQPLPEPA.

An MTTase N-terminal domain is found at 7-127 (KRLYIKTYGC…LPELIARAHR (121 aa)). [4Fe-4S] cluster contacts are provided by C16, C52, C90, C165, C169, and C172. Residues 151 to 378 (QVSGVSAFLT…NQLLDEQQKA (228 aa)) enclose the Radical SAM core domain. In terms of domain architecture, TRAM spans 381–443 (ILQVGKTMPV…KMSLGGVLET (63 aa)).

The protein belongs to the methylthiotransferase family. MiaB subfamily. Monomer. Requires [4Fe-4S] cluster as cofactor.

It localises to the cytoplasm. The catalysed reaction is N(6)-dimethylallyladenosine(37) in tRNA + (sulfur carrier)-SH + AH2 + 2 S-adenosyl-L-methionine = 2-methylsulfanyl-N(6)-dimethylallyladenosine(37) in tRNA + (sulfur carrier)-H + 5'-deoxyadenosine + L-methionine + A + S-adenosyl-L-homocysteine + 2 H(+). Functionally, catalyzes the methylthiolation of N6-(dimethylallyl)adenosine (i(6)A), leading to the formation of 2-methylthio-N6-(dimethylallyl)adenosine (ms(2)i(6)A) at position 37 in tRNAs that read codons beginning with uridine. The protein is tRNA-2-methylthio-N(6)-dimethylallyladenosine synthase of Caulobacter sp. (strain K31).